We begin with the raw amino-acid sequence, 374 residues long: Large ribosomal subunit protein bL27m (374 aa).

The transit peptide at 1-41 directs the protein to the mitochondrion; sequence MLRLSGVKSAVRARAAAGAAFSVSLSGPQAVSLLALPLVRH.

It belongs to the bacterial ribosomal protein bL27 family.

It localises to the mitochondrion. In terms of biological role, component of the large subunit of mitochondrial ribosome. This chain is Large ribosomal subunit protein bL27m (MRPL2), found in Yarrowia lipolytica (strain CLIB 122 / E 150) (Yeast).